Reading from the N-terminus, the 142-residue chain is Large ribosomal subunit protein mL42 (142 aa).

The transit peptide at 1–31 directs the protein to the mitochondrion; sequence MAAAVKWAISNRTIWKHLLPIQNGALSSACH.

The protein belongs to the mitochondrion-specific ribosomal protein mL42 family. Component of the mitochondrial ribosome large subunit (39S) which comprises a 16S rRNA and about 50 distinct proteins. Component of the mitochondrial ribosome small subunit (28S) which comprises a 12S rRNA and about 30 distinct proteins.

Its subcellular location is the mitochondrion. The protein is Large ribosomal subunit protein mL42 (Mrpl42) of Mus musculus (Mouse).